We begin with the raw amino-acid sequence, 840 residues long: MWSGIPVFALLSSIGIAAAENGLDGWLRYASVPCNGNCQRALPSHIVTLNSTKSSQVYVAGQELQDGLHQILGKHASVKSTGCSTDSSIVVGTVEAYRQVCNTGSQAPELDVDGFWLSIRGKSVQIVGQTERGALYGAYEYLSMLAQGNFSQVSYATSPHAPIRWVNQWDNMDGSIERGYGGPSIFFKDGVIPQDLSRVKQYARLLASVRINGIVVNNVNANASLLMPSNMDGLARIADVFRPYGIRVGISLNFASPSTLGNLSTYDPFDSSVIAWWGNVTDQLYARIPDMAGYLVKANSEGQPGPTTYNRTLADGANMFARALKPHGGVVMFRAFVYDHHISEDNWYNDRANAAVDFFKPLDGKFDDNVVVQIKYGPIDFQVREPASPLFANLYKTNTAIELQVTQEYLGQQSHLVYLPPLWQTILRFDLRVDQKPSPVRDIISGQRFDRPLGGWAAVVNVGTNTTWLGSHLAMSNLYAYGRLAWEPTLDSEDIVQDWIRLTFGLDRRVLDTLTQMSMESWPAYENYSGNLGIQTLTDILYTHYGPNPASQDGNGWGQWTRADHLSIGMDRTVKNGTKFSGQYPAEVAAMYENIETTPDNLMLWFHHVNYTQRLHSGKTVIQHFYDAHYDGAETAQTFVSRWESLRERIDAERYQHVLARLIYQAGHSIVWRDAINNFYRNLSGIADEKERVGYHPWRVEAEDMQLDGYVPYAVSPFETASNFTAIVTASNGTTGTASATLDFKTGTYDLGINYYDMYGGKSHWTVYLNDRVVGQWQGNSEDVLSHTPSIYLDGHSATRITFRDVKIHKGDRLKIVGEPDGVEPAPLDYAVVLPRGIVD.

The first 19 residues, 1–19 (MWSGIPVFALLSSIGIAAA), serve as a signal peptide directing secretion. N-linked (GlcNAc...) asparagine glycans are attached at residues N50, N149, N222, N262, N279, N310, N465, N527, N576, N610, N682, N723, and N732.

It belongs to the glycosyl hydrolase 67 family.

It localises to the secreted. The enzyme catalyses an alpha-D-glucuronoside + H2O = D-glucuronate + an alcohol. Alpha-glucuronidase involved in the hydrolysis of xylan, a major structural heterogeneous polysaccharide found in plant biomass representing the second most abundant polysaccharide in the biosphere, after cellulose. Releases 4-O-methylglucuronic acid from xylan. This is Probable alpha-glucuronidase A (aguA) from Neosartorya fischeri (strain ATCC 1020 / DSM 3700 / CBS 544.65 / FGSC A1164 / JCM 1740 / NRRL 181 / WB 181) (Aspergillus fischerianus).